The following is a 62-amino-acid chain: MGRIRQTLIKRTAMELIKKYRDLFTTDFETNKRVLEEVAQISTKRLRNRIAGYITHKMRQLQ.

Belongs to the eukaryotic ribosomal protein eS17 family.

This is Small ribosomal subunit protein eS17 from Methanocaldococcus jannaschii (strain ATCC 43067 / DSM 2661 / JAL-1 / JCM 10045 / NBRC 100440) (Methanococcus jannaschii).